Consider the following 281-residue polypeptide: Cardosin-F (281 aa).

A Peptidase A1 domain is found at 18-278; sequence YYGEIGIGTP…DYGNLLVGFA (261 aa). Residue Asp-36 is part of the active site. An intrachain disulfide couples Cys-181 to Cys-185. Residue Asp-190 is part of the active site. Asn-213 carries an N-linked (GlcNAc...) asparagine glycan.

It belongs to the peptidase A1 family. Heterodimer of a light chain and a heavy chain. An intermediate form is produced first, and undergoes proteolytic processing to remove the internal plant-specific insert (PSI) and the propeptide. In terms of processing, N-glycosylated. As to expression, pistils.

The protein localises to the microsome membrane. It is found in the protein storage vacuole. It localises to the secreted. The protein resides in the cell wall. Its subcellular location is the extracellular space. The protein localises to the extracellular matrix. With respect to regulation, inhibited by pepstatin. In terms of biological role, aspartic protease with a high preference for bonds between hydrophobic residues. This Cynara cardunculus (Cardoon) protein is Cardosin-F.